Here is a 113-residue protein sequence, read N- to C-terminus: uncharacterized protein (113 aa).

This is an uncharacterized protein from Mycoplasma pneumoniae (strain ATCC 29342 / M129 / Subtype 1) (Mycoplasmoides pneumoniae).